The primary structure comprises 94 residues: MAFTAMTVAPSALADLVLAQKSGCTVCHSVEAAIVGPAYKDVAAKYRGDAAAQDRLVAKVMAGGVGNWGQVPMPPNAHVPAADIKALVTWILGL.

An N-terminal signal peptide occupies residues 1–14 (MAFTAMTVAPSALA). Positions 24, 27, 28, and 73 each coordinate heme c.

Binds 1 heme c group covalently per subunit.

In terms of biological role, efficiently couple electron transfer between the cytochrome bc1 complex and the photosynthetic reaction center. This chain is Cytochrome c-551, found in Allochromatium vinosum (strain ATCC 17899 / DSM 180 / NBRC 103801 / NCIMB 10441 / D) (Chromatium vinosum).